Consider the following 275-residue polypeptide: MRKIALKVAYIGTNYHGFQRQPDVPTVEGKLLEALEGAGIIEDPKRARFQIAGRTDRGVHALGNFVSFFTEEDIHVNQINDLLPRDIRVLAWASVMYPFKVRYPLERHYRYILHREESMDTYSMAEAAAHFRGTHDFSNFSRRSDRDPVRRINDVRISEVGDSIIIDVYGESFLWQMVRKMVRALLMVSEGELAPDDMAGLLDTDRRVFLEPMPPENLILMDLKYGVKIKLRHDEYAFKRFISLLEEEFKVYREMSMVRRAMSDHLRDLQEHELD.

Asp-56 serves as the catalytic Nucleophile. Tyr-109 provides a ligand contact to substrate.

It belongs to the tRNA pseudouridine synthase TruA family.

The enzyme catalyses uridine(38/39/40) in tRNA = pseudouridine(38/39/40) in tRNA. In terms of biological role, formation of pseudouridine at positions 38, 39 and 40 in the anticodon stem and loop of transfer RNAs. The chain is tRNA pseudouridine synthase A from Methanothermobacter thermautotrophicus (strain ATCC 29096 / DSM 1053 / JCM 10044 / NBRC 100330 / Delta H) (Methanobacterium thermoautotrophicum).